Consider the following 398-residue polypeptide: Immunoglobulin heavy constant gamma 2A (398 aa).

Ig-like domains follow at residues 5–97 (PSVY…KKIE), 120–219 (PSVF…RTIS), and 228–324 (PQVY…KSFS). Intrachain disulfides connect Cys-26–Cys-81, Cys-143–Cys-203, and Cys-249–Cys-307. Residue Asn-179 is glycosylated (N-linked (GlcNAc...) asparagine). The chain crosses the membrane as a helical span at residues 345-362 (GLWTTITIFISLFLLSVC). Topologically, residues 363–398 (YSASVTLFKVKWIFSSVVELKQTISPDYRNMIGQGA) are cytoplasmic.

It is found in the cell membrane. This Mus musculus (Mouse) protein is Immunoglobulin heavy constant gamma 2A.